The sequence spans 387 residues: Erythronate-4-phosphate dehydrogenase (387 aa).

The substrate site is built by serine 45 and threonine 67. Aspartate 147 contributes to the NAD(+) binding site. Arginine 208 is an active-site residue. Aspartate 232 lines the NAD(+) pocket. Glutamate 237 is a catalytic residue. The active-site Proton donor is the histidine 254. Glycine 257 is an NAD(+) binding site. Tyrosine 258 contributes to the substrate binding site.

Belongs to the D-isomer specific 2-hydroxyacid dehydrogenase family. PdxB subfamily. As to quaternary structure, homodimer.

The protein resides in the cytoplasm. It carries out the reaction 4-phospho-D-erythronate + NAD(+) = (R)-3-hydroxy-2-oxo-4-phosphooxybutanoate + NADH + H(+). It functions in the pathway cofactor biosynthesis; pyridoxine 5'-phosphate biosynthesis; pyridoxine 5'-phosphate from D-erythrose 4-phosphate: step 2/5. Its function is as follows. Catalyzes the oxidation of erythronate-4-phosphate to 3-hydroxy-2-oxo-4-phosphonooxybutanoate. The sequence is that of Erythronate-4-phosphate dehydrogenase from Shewanella sediminis (strain HAW-EB3).